Reading from the N-terminus, the 308-residue chain is Glycine--tRNA ligase alpha subunit (308 aa).

The protein belongs to the class-II aminoacyl-tRNA synthetase family. Tetramer of two alpha and two beta subunits.

It localises to the cytoplasm. The catalysed reaction is tRNA(Gly) + glycine + ATP = glycyl-tRNA(Gly) + AMP + diphosphate. This is Glycine--tRNA ligase alpha subunit from Brucella abortus (strain 2308).